Consider the following 70-residue polypeptide: DNA-directed RNA polymerase subunit omega (70 aa).

The protein belongs to the RNA polymerase subunit omega family. As to quaternary structure, the RNAP catalytic core consists of 2 alpha, 1 beta, 1 beta' and 1 omega subunit. When a sigma factor is associated with the core the holoenzyme is formed, which can initiate transcription.

It carries out the reaction RNA(n) + a ribonucleoside 5'-triphosphate = RNA(n+1) + diphosphate. Functionally, promotes RNA polymerase assembly. Latches the N- and C-terminal regions of the beta' subunit thereby facilitating its interaction with the beta and alpha subunits. The protein is DNA-directed RNA polymerase subunit omega of Methylobacillus flagellatus (strain ATCC 51484 / DSM 6875 / VKM B-1610 / KT).